The sequence spans 245 residues: Demethylmenaquinone methyltransferase (245 aa).

Residues threonine 69, aspartate 90, and 118 to 119 contribute to the S-adenosyl-L-methionine site; that span reads DC.

Belongs to the class I-like SAM-binding methyltransferase superfamily. MenG/UbiE family.

It carries out the reaction a 2-demethylmenaquinol + S-adenosyl-L-methionine = a menaquinol + S-adenosyl-L-homocysteine + H(+). It functions in the pathway quinol/quinone metabolism; menaquinone biosynthesis; menaquinol from 1,4-dihydroxy-2-naphthoate: step 2/2. Functionally, methyltransferase required for the conversion of demethylmenaquinol (DMKH2) to menaquinol (MKH2). In Porphyromonas gingivalis (strain ATCC 33277 / DSM 20709 / CIP 103683 / JCM 12257 / NCTC 11834 / 2561), this protein is Demethylmenaquinone methyltransferase.